A 308-amino-acid polypeptide reads, in one-letter code: Transaldolase (308 aa).

K125 functions as the Schiff-base intermediate with substrate in the catalytic mechanism.

Belongs to the transaldolase family. Type 1 subfamily. In terms of assembly, homodimer.

The protein resides in the cytoplasm. It carries out the reaction D-sedoheptulose 7-phosphate + D-glyceraldehyde 3-phosphate = D-erythrose 4-phosphate + beta-D-fructose 6-phosphate. It participates in carbohydrate degradation; pentose phosphate pathway; D-glyceraldehyde 3-phosphate and beta-D-fructose 6-phosphate from D-ribose 5-phosphate and D-xylulose 5-phosphate (non-oxidative stage): step 2/3. In terms of biological role, transaldolase is important for the balance of metabolites in the pentose-phosphate pathway. This chain is Transaldolase, found in Pseudomonas putida (strain GB-1).